A 102-amino-acid polypeptide reads, in one-letter code: Large ribosomal subunit protein uL24 (102 aa).

It belongs to the universal ribosomal protein uL24 family. In terms of assembly, part of the 50S ribosomal subunit.

One of two assembly initiator proteins, it binds directly to the 5'-end of the 23S rRNA, where it nucleates assembly of the 50S subunit. In terms of biological role, one of the proteins that surrounds the polypeptide exit tunnel on the outside of the subunit. The polypeptide is Large ribosomal subunit protein uL24 (Paraburkholderia xenovorans (strain LB400)).